Consider the following 182-residue polypeptide: Probable RNA 2'-phosphotransferase (182 aa).

The protein belongs to the KptA/TPT1 family.

Removes the 2'-phosphate from RNA via an intermediate in which the phosphate is ADP-ribosylated by NAD followed by a presumed transesterification to release the RNA and generate ADP-ribose 1''-2''-cyclic phosphate (APPR&gt;P). May function as an ADP-ribosylase. This chain is Probable RNA 2'-phosphotransferase, found in Pseudomonas aeruginosa (strain UCBPP-PA14).